The following is a 197-amino-acid chain: MIEMEILRNTVQKIAKHAIEAIDKVDEAELEMMISKIMDASSVFIVGTGRSELIGKAFAMRLMHLGFKVHVVGDVTTPAIRDEDCLIAISGSGETKTVTLAAETSRSVGATVVAVTATPESTLTGYSDVVICIPSKTKEPWKYYTSGVLRGEYDDLTPMGTLFEDSTHLFLDGLIAEFMSILGKREKDLKERHAIIE.

The region spanning 33–184 (MISKIMDASS…IAEFMSILGK (152 aa)) is the SIS domain.

The protein belongs to the SIS family. PHI subfamily.

This is an uncharacterized protein from Methanothermobacter thermautotrophicus (strain ATCC 29096 / DSM 1053 / JCM 10044 / NBRC 100330 / Delta H) (Methanobacterium thermoautotrophicum).